We begin with the raw amino-acid sequence, 291 residues long: MLVATLLCALCCGLLAASAHAGYSEDRCSWRGSGLTQEPGSVGQLTLDCTEGAIEWLYPAGALRLTLGGPDPGTRPSIVCLRPERPFAGAQVFAERMTGNLELLLAEGPDLAGGRCMRWGPRERRALFLQATPHRDISRRVAAFRFELHEDQRAEMSPQAQGLGVDGACRPCSDAELLLAACTSDFVIHGTIHGVAHDTELQESVITVVVARVIRQTLPLFKEGSSEGQGRASIRTLLRCGVRPGPGSFLFMGWSRFGEAWLGCAPRFQEFSRVYSAALTTHLNPCEMALD.

The first 21 residues, 1–21 (MLVATLLCALCCGLLAASAHA), serve as a signal peptide directing secretion. Cystine bridges form between Cys-28–Cys-49, Cys-80–Cys-116, Cys-169–Cys-240, Cys-172–Cys-264, and Cys-182–Cys-286.

This sequence belongs to the meteorin family. Monomer. Highly expressed in brain. Expressed in undifferentiated neural progenitors and in astrocyte lineage, particularly in Bergmann glia, a subtype of radial glia, and a few discrete neuronal populations residing in the superior colliculus, the ocular motor nucleus, the raphe and pontine nuclei, and in various thalamic nuclei. Weakly expressed in heart, kidney, skeletal muscle, spleen, testis, gut and lung.

The protein localises to the secreted. Its function is as follows. Involved in both glial cell differentiation and axonal network formation during neurogenesis. Promotes astrocyte differentiation and transforms cerebellar astrocytes into radial glia. Also induces axonal extension in small and intermediate neurons of sensory ganglia by activating nearby satellite glia. The polypeptide is Meteorin (Metrn) (Mus musculus (Mouse)).